A 2511-amino-acid polypeptide reads, in one-letter code: Chromodomain-helicase-DNA-binding protein 8 (2511 aa).

A disordered region spans residues 484-615 (PRVLNQDELP…RSNRQVKRKK (132 aa)). Residues 515-524 (GGGVGGGGGG) show a composition bias toward gly residues. A compositionally biased stretch (basic residues) spans 604–615 (KRRSNRQVKRKK). Chromo domains follow at residues 680 to 745 (AIVD…AQMR) and 760 to 826 (VEVD…RTPR). Residues 859 to 1033 (LFNWYNRQNC…FSLLHFLEPA (175 aa)) form the Helicase ATP-binding domain. Position 872–879 (872–879 (DEMGLGKT)) interacts with ATP. The short motif at 984-987 (DEAH) is the DEAH box element. The 157-residue stretch at 1174-1330 (LLDKLLPRLK…SMSGNKESSI (157 aa)) folds into the Helicase C-terminal domain. 4 disordered regions span residues 1440-1482 (TRQF…HSGG), 1715-1736 (EQQA…SEDP), 2086-2168 (SKNN…LTDP), and 2468-2511 (PSAL…SSED). Residues 1452 to 1461 (DLSDLDSDDD) are compositionally biased toward acidic residues. Over residues 2111–2125 (DSGSSSSSRHSGSSD) the composition is skewed to low complexity.

Belongs to the SNF2/RAD54 helicase family. CHD8 subfamily. As to quaternary structure, component of some MLL1/MLL complex.

The protein localises to the nucleus. The enzyme catalyses ATP + H2O = ADP + phosphate + H(+). Its function is as follows. ATP-dependent chromatin-remodeling factor, it slides nucleosomes along DNA; nucleosome sliding requires ATP. Acts as a transcription repressor by remodeling chromatin structure and recruiting histone H1 to target genes. Suppresses p53/tp53-mediated apoptosis by recruiting histone H1 and preventing p53/tp53 transactivation activity. Acts as a negative regulator of Wnt signaling pathway by regulating beta-catenin (ctnnb1) activity. Negatively regulates ctnnb1-targeted gene expression by being recruited specifically to the promoter regions of several ctnnb1 responsive genes. May also act as a transcription activator by participating in efficient U6 RNA polymerase III transcription. The sequence is that of Chromodomain-helicase-DNA-binding protein 8 from Danio rerio (Zebrafish).